A 154-amino-acid chain; its full sequence is Probable cyclic pyranopterin monophosphate synthase (154 aa).

Substrate is bound by residues 74 to 76 (LCH) and 110 to 111 (ME). Asp-125 is a catalytic residue.

It belongs to the MoaC family. Homohexamer; trimer of dimers.

The catalysed reaction is (8S)-3',8-cyclo-7,8-dihydroguanosine 5'-triphosphate = cyclic pyranopterin phosphate + diphosphate. Its pathway is cofactor biosynthesis; molybdopterin biosynthesis. Catalyzes the conversion of (8S)-3',8-cyclo-7,8-dihydroguanosine 5'-triphosphate to cyclic pyranopterin monophosphate (cPMP). In Methanosphaerula palustris (strain ATCC BAA-1556 / DSM 19958 / E1-9c), this protein is Probable cyclic pyranopterin monophosphate synthase.